We begin with the raw amino-acid sequence, 768 residues long: Putative calcium up-regulated protein H (768 aa).

Positions 1-22 (MINIEDISKSSNQSEEKQLKST) are disordered. 2 Ricin B-type lectin domains span residues 25–145 (KPKY…WTTF) and 116–248 (QGNG…WGIN).

Belongs to the cup family.

The protein resides in the cytoplasm. It localises to the membrane. May play an important role in stabilizing and/or regulating the cell membrane during Ca(2+) stress or certain stages of development. The polypeptide is Putative calcium up-regulated protein H (cupH) (Dictyostelium discoideum (Social amoeba)).